The chain runs to 1240 residues: ATP-dependent helicase/nuclease subunit A (1240 aa).

Residues 12–485 (SQWTDDQWKA…IDLAKNFRSR (474 aa)) form the UvrD-like helicase ATP-binding domain. Residue 33 to 40 (AAAGSGKT) coordinates ATP. A UvrD-like helicase C-terminal domain is found at 497–804 (KQIMGEEVGE…RIMTIHKSKG (308 aa)).

Belongs to the helicase family. AddA subfamily. Heterodimer of AddA and AddB/RexB. The cofactor is Mg(2+).

It catalyses the reaction Couples ATP hydrolysis with the unwinding of duplex DNA by translocating in the 3'-5' direction.. It carries out the reaction ATP + H2O = ADP + phosphate + H(+). The heterodimer acts as both an ATP-dependent DNA helicase and an ATP-dependent, dual-direction single-stranded exonuclease. Recognizes the chi site generating a DNA molecule suitable for the initiation of homologous recombination. The AddA nuclease domain is required for chi fragment generation; this subunit has the helicase and 3' -&gt; 5' nuclease activities. This is ATP-dependent helicase/nuclease subunit A from Bacillus cereus (strain AH820).